We begin with the raw amino-acid sequence, 212 residues long: Uridine kinase (212 aa).

Position 13–20 (13–20 (GASASGKS)) interacts with ATP.

It belongs to the uridine kinase family.

It is found in the cytoplasm. The catalysed reaction is uridine + ATP = UMP + ADP + H(+). It carries out the reaction cytidine + ATP = CMP + ADP + H(+). It functions in the pathway pyrimidine metabolism; CTP biosynthesis via salvage pathway; CTP from cytidine: step 1/3. Its pathway is pyrimidine metabolism; UMP biosynthesis via salvage pathway; UMP from uridine: step 1/1. This is Uridine kinase from Shewanella frigidimarina (strain NCIMB 400).